The chain runs to 359 residues: Fructose-bisphosphate aldolase class 2 (359 aa).

Ser50 is a D-glyceraldehyde 3-phosphate binding site. Residue Asp83 is the Proton donor of the active site. The Zn(2+) site is built by His84, Asp105, Glu142, and His198. Gly199 lines the dihydroxyacetone phosphate pocket. His232 is a Zn(2+) binding site. Residues Gly233–Ser235 and Asn275–Thr278 each bind dihydroxyacetone phosphate.

This sequence belongs to the class II fructose-bisphosphate aldolase family. Zn(2+) serves as cofactor.

The enzyme catalyses beta-D-fructose 1,6-bisphosphate = D-glyceraldehyde 3-phosphate + dihydroxyacetone phosphate. The protein operates within carbohydrate degradation; glycolysis; D-glyceraldehyde 3-phosphate and glycerone phosphate from D-glucose: step 4/4. Functionally, catalyzes the aldol condensation of dihydroxyacetone phosphate (DHAP or glycerone-phosphate) with glyceraldehyde 3-phosphate (G3P) to form fructose 1,6-bisphosphate (FBP) in gluconeogenesis and the reverse reaction in glycolysis. This Synechocystis sp. (strain ATCC 27184 / PCC 6803 / Kazusa) protein is Fructose-bisphosphate aldolase class 2 (fbaA).